We begin with the raw amino-acid sequence, 331 residues long: Probable allantoicase (331 aa).

Belongs to the allantoicase family.

The enzyme catalyses allantoate + H2O = (S)-ureidoglycolate + urea. It participates in nitrogen metabolism; (S)-allantoin degradation; (S)-ureidoglycolate from allantoate (aminidohydrolase route): step 1/1. This is Probable allantoicase from Pseudomonas syringae pv. tomato (strain ATCC BAA-871 / DC3000).